Here is a 397-residue protein sequence, read N- to C-terminus: Succinyl-diaminopimelate desuccinylase (397 aa).

His73 serves as a coordination point for Zn(2+). Residue Asp75 is part of the active site. Asp106 serves as a coordination point for Zn(2+). The active-site Proton acceptor is the Glu140. Residues Glu141, Glu169, and His366 each coordinate Zn(2+).

Belongs to the peptidase M20A family. DapE subfamily. In terms of assembly, homodimer. Zn(2+) serves as cofactor. The cofactor is Co(2+).

The enzyme catalyses N-succinyl-(2S,6S)-2,6-diaminopimelate + H2O = (2S,6S)-2,6-diaminopimelate + succinate. It participates in amino-acid biosynthesis; L-lysine biosynthesis via DAP pathway; LL-2,6-diaminopimelate from (S)-tetrahydrodipicolinate (succinylase route): step 3/3. Catalyzes the hydrolysis of N-succinyl-L,L-diaminopimelic acid (SDAP), forming succinate and LL-2,6-diaminopimelate (DAP), an intermediate involved in the bacterial biosynthesis of lysine and meso-diaminopimelic acid, an essential component of bacterial cell walls. The chain is Succinyl-diaminopimelate desuccinylase from Rhizobium leguminosarum bv. trifolii (strain WSM2304).